Consider the following 150-residue polypeptide: Peptide deformylase (150 aa).

Fe cation contacts are provided by Cys-88 and His-130. Glu-131 is an active-site residue. His-134 contributes to the Fe cation binding site.

Belongs to the polypeptide deformylase family. The cofactor is Fe(2+).

It catalyses the reaction N-terminal N-formyl-L-methionyl-[peptide] + H2O = N-terminal L-methionyl-[peptide] + formate. Its function is as follows. Removes the formyl group from the N-terminal Met of newly synthesized proteins. Requires at least a dipeptide for an efficient rate of reaction. N-terminal L-methionine is a prerequisite for activity but the enzyme has broad specificity at other positions. The chain is Peptide deformylase from Desulfitobacterium hafniense (strain Y51).